The primary structure comprises 503 residues: MNILLMQRIVSFILVVSQGRYFHVGELTMTMLKRPQEEESDNNATKKLKTRLTYPCILGKDKVTGKFIFPAITKDDVMNARLFLKDNDLKTFLEYFLPVEVNSIYIYFMIKLLGFDVKDKELFMALNSNITSNKERSSAELSSIHAKAEDEDELTDPLEKKHAVKLIKDLQKAINKVLSTRLRLPNFNTIDHFTATLRNAKKILVLTGAGVSTSLGIPDFRSSEGFYSKIRHLGLEDPQDVFNLDIFLQDPSVFYNIAHMVLPPENMYSPLHSFIKMLQDKGKLLRNYTQNIDNLESYAGIDPDKLVQCHGSFATASCVTCHWQIPGEKIFENIRNLELPLCPYCYQKRKQYFPMSNGNNTVQTNINFNSPILKSYGVLKPDMTFFGEALPSRFHKTIRKDILECDLLICIGTSLKVAPVSEIVNMVPSHVPQILINRDMVTHAEFDLNLLGFCDDVASLVAKKCHWDIPHKKWQDLKKIDYNCTEIDKGTYKIKKQPRKKQQ.

The Deacetylase sirtuin-type domain occupies 183-468 (RLPNFNTIDH…SLVAKKCHWD (286 aa)). Residues 208–227 (GAGVSTSLGIPDFRSSEGFY) and 290–293 (QNID) each bind NAD(+). The Proton acceptor role is filled by histidine 310. Zn(2+)-binding residues include cysteine 318, cysteine 321, cysteine 342, and cysteine 345. Residues 412 to 414 (GTS), 437 to 439 (NRD), and cysteine 454 each bind NAD(+).

It belongs to the sirtuin family. Class I subfamily. In terms of assembly, identified in the Set3C complex with HOS2, SIF2, SNT1, CPR1, HOS4/YIL112W and SET3. Its presence is however not essential for meiotic repression by the Set3C complex. Interacts with SUM1 and RFM1. The interaction with SUM1 is mediated by RFM1. The cofactor is Zn(2+).

The protein localises to the nucleus. It catalyses the reaction N(6)-acetyl-L-lysyl-[protein] + NAD(+) + H2O = 2''-O-acetyl-ADP-D-ribose + nicotinamide + L-lysyl-[protein]. NAD-dependent histone deacetylase involved in telomeric silencing. Histone deacetylase proteins act via the formation of large multiprotein complexes that are responsible for the deacetylation of lysine residues on the N-terminal part of the core histones (H2A, H2B, H3 and H4). Histone deacetylation gives a tag for epigenetic repression and plays an important role in transcriptional regulation, cell cycle progression and developmental events. Restores silencing at HMR in SIR2 mutants when overexpressed. Required to repress middle sporulation genes during vegetative growth. Acts as a sensor of NAD(+) levels and regulator of NAD(+) biosynthesis. Regulates the gene expression of de novo NAD(+) biosynthesis genes. This chain is NAD-dependent protein deacetylase HST1 (HST1), found in Saccharomyces cerevisiae (strain ATCC 204508 / S288c) (Baker's yeast).